A 60-amino-acid polypeptide reads, in one-letter code: Large ribosomal subunit protein uL30 (60 aa).

It belongs to the universal ribosomal protein uL30 family. Part of the 50S ribosomal subunit.

In Bacillus pumilus (strain SAFR-032), this protein is Large ribosomal subunit protein uL30.